The sequence spans 1117 residues: PR domain zinc finger protein 10 (1117 aa).

Residues 97 to 142 (QQTPLGGLEAKEEEDEDEDEDTEEDEEEDGEDADLDDWEPDPPRPF) are disordered. Over residues 107-136 (KEEEDEDEDEDTEEDEEEDGEDADLDDWEP) the composition is skewed to acidic residues. The region spanning 182 to 300 (LPLVLYIDRF…PKQELKVWYA (119 aa)) is the SET domain. An N-terminal PR domain; essential for transcriptional activator activity region spans residues 201–305 (IPKRTQLGPV…KVWYAASYAE (105 aa)). The C2H2-type 1 zinc finger occupies 329 to 351 (WPCYECNRRFISSEQLQQHLNSH). A Glycyl lysine isopeptide (Lys-Gly) (interchain with G-Cter in SUMO2) cross-link involves residue lysine 354. Residues 361–381 (TRGRGRGRGKRRFGPGRRPGR) show a composition bias toward basic residues. The interval 361 to 386 (TRGRGRGRGKRRFGPGRRPGRPPKFI) is disordered. A Phosphoserine modification is found at serine 398. Residue threonine 402 is modified to Phosphothreonine. The tract at residues 440 to 474 (QETQSSLEHEPETHTLHLQPQHEESVVPTQSTLTA) is disordered. Basic and acidic residues predominate over residues 446–464 (LEHEPETHTLHLQPQHEES). C2H2-type zinc fingers lie at residues 500–522 (FKCLQCGKAFREKDKLDQHLRFH), 530–552 (LTCDLCNKGFISSASLESHMKLH), 558–580 (YSCIFCPESFDRLDLLKDHVAIH), 586–609 (FTCPTCKKRFPDFIQVKKHVRSFH), 614–636 (YQCTECDKAFCRPDKLRLHMLRH), 642–665 (FLCSTCGKQFKRKDKLREHMQRMH), 697–720 (FKCRLCMMGFRRRGMLVNHLSKRH), 742–765 (YFCQYCDKVYKSASKRKAHILKNH), and 804–827 (VCCPHCSKQYSSKTKMVQHIRKKH). Positions 871–1097 (QAMTELSQTL…QTTSQQQTTQ (227 aa)) are C-terminal glutamine-rich region; essential for transcriptional activator activity. Disordered stretches follow at residues 919-943 (VAPATSPHQSQQSTVDVGQLHDPQP), 958-1001 (GQPL…SSVQ), and 1066-1094 (QTSALSGGVQVQPPAHSDSLDPQTTSQQQ). Positions 924 to 934 (SPHQSQQSTVD) are enriched in polar residues.

This sequence belongs to the class V-like SAM-binding methyltransferase superfamily.

It localises to the nucleus. Transcriptional activator, essential for early embryonic development and survival of embryonic stem cells (ESCs). Supports cell growth and survival during early development by transcriptionally activating the expression of the translation initiation factor EIF3B, to sustain global translation. Activates the transcription of FLNC. This is PR domain zinc finger protein 10 (PRDM10) from Pongo abelii (Sumatran orangutan).